The following is a 612-amino-acid chain: Dihydroxy-acid dehydratase (612 aa).

Asp-81 serves as a coordination point for Mg(2+). [2Fe-2S] cluster is bound at residue Cys-122. The Mg(2+) site is built by Asp-123 and Lys-124. At Lys-124 the chain carries N6-carboxylysine. Position 193 (Cys-193) interacts with [2Fe-2S] cluster. Position 489 (Glu-489) interacts with Mg(2+). Ser-515 functions as the Proton acceptor in the catalytic mechanism.

It belongs to the IlvD/Edd family. As to quaternary structure, homodimer. [2Fe-2S] cluster serves as cofactor. Mg(2+) is required as a cofactor.

The enzyme catalyses (2R)-2,3-dihydroxy-3-methylbutanoate = 3-methyl-2-oxobutanoate + H2O. It catalyses the reaction (2R,3R)-2,3-dihydroxy-3-methylpentanoate = (S)-3-methyl-2-oxopentanoate + H2O. It participates in amino-acid biosynthesis; L-isoleucine biosynthesis; L-isoleucine from 2-oxobutanoate: step 3/4. Its pathway is amino-acid biosynthesis; L-valine biosynthesis; L-valine from pyruvate: step 3/4. In terms of biological role, functions in the biosynthesis of branched-chain amino acids. Catalyzes the dehydration of (2R,3R)-2,3-dihydroxy-3-methylpentanoate (2,3-dihydroxy-3-methylvalerate) into 2-oxo-3-methylpentanoate (2-oxo-3-methylvalerate) and of (2R)-2,3-dihydroxy-3-methylbutanoate (2,3-dihydroxyisovalerate) into 2-oxo-3-methylbutanoate (2-oxoisovalerate), the penultimate precursor to L-isoleucine and L-valine, respectively. The polypeptide is Dihydroxy-acid dehydratase (Stenotrophomonas maltophilia (strain K279a)).